Here is a 167-residue protein sequence, read N- to C-terminus: Translationally-controlled tumor protein homolog (167 aa).

One can recognise a TCTP domain in the interval 1–167 (MIIFTDVISG…WKHGVSEDKI (167 aa)).

This sequence belongs to the TCTP family.

It is found in the cytoplasm. The protein resides in the cytoskeleton. In terms of biological role, involved in protein synthesis. Involved in microtubule stabilization. The sequence is that of Translationally-controlled tumor protein homolog from Debaryomyces hansenii (strain ATCC 36239 / CBS 767 / BCRC 21394 / JCM 1990 / NBRC 0083 / IGC 2968) (Yeast).